A 623-amino-acid polypeptide reads, in one-letter code: Activator of C kinase protein 1 (623 aa).

The interval lysine 141–serine 230 is disordered. The segment covering alanine 152–serine 161 has biased composition (polar residues). The span at serine 176–proline 193 shows a compositional bias: basic and acidic residues. Residues lysine 184 and lysine 191 each participate in a glycyl lysine isopeptide (Lys-Gly) (interchain with G-Cter in ubiquitin) cross-link. Polar residues predominate over residues lysine 206–alanine 215. Sel1-like repeat units follow at residues proline 318–asparagine 361, serine 408–aspartate 444, proline 495–proline 531, and alanine 576–phenylalanine 611.

This Saccharomyces cerevisiae (strain ATCC 204508 / S288c) (Baker's yeast) protein is Activator of C kinase protein 1 (ACK1).